Reading from the N-terminus, the 367-residue chain is 2-aminoethylphosphonate--pyruvate transaminase (367 aa).

Position 194 is an N6-(pyridoxal phosphate)lysine (Lys194).

It belongs to the class-V pyridoxal-phosphate-dependent aminotransferase family. PhnW subfamily. In terms of assembly, homodimer. It depends on pyridoxal 5'-phosphate as a cofactor.

The catalysed reaction is (2-aminoethyl)phosphonate + pyruvate = phosphonoacetaldehyde + L-alanine. Functionally, involved in phosphonate degradation. In Salmonella choleraesuis (strain SC-B67), this protein is 2-aminoethylphosphonate--pyruvate transaminase.